Here is a 100-residue protein sequence, read N- to C-terminus: uncharacterized protein (100 aa).

The interval 40-100 is disordered; the sequence is GDQMARKATS…DPTKNKSGRG (61 aa).

This is an uncharacterized protein from Mycobacterium tuberculosis (strain ATCC 25618 / H37Rv).